The following is a 271-amino-acid chain: Exosome complex component Rrp42 (271 aa).

It belongs to the RNase PH family. Rrp42 subfamily. In terms of assembly, component of the archaeal exosome complex. Forms a hexameric ring-like arrangement composed of 3 Rrp41-Rrp42 heterodimers. The hexameric ring associates with a trimer of Rrp4 and/or Csl4 subunits.

The protein localises to the cytoplasm. Functionally, non-catalytic component of the exosome, which is a complex involved in RNA degradation. Contributes to the structuring of the Rrp41 active site. This is Exosome complex component Rrp42 from Methanothermobacter thermautotrophicus (strain ATCC 29096 / DSM 1053 / JCM 10044 / NBRC 100330 / Delta H) (Methanobacterium thermoautotrophicum).